Here is a 446-residue protein sequence, read N- to C-terminus: Histidine--tRNA ligase (446 aa).

This sequence belongs to the class-II aminoacyl-tRNA synthetase family. In terms of assembly, homodimer.

Its subcellular location is the cytoplasm. It carries out the reaction tRNA(His) + L-histidine + ATP = L-histidyl-tRNA(His) + AMP + diphosphate + H(+). In Burkholderia pseudomallei (strain 1710b), this protein is Histidine--tRNA ligase.